A 378-amino-acid polypeptide reads, in one-letter code: Putative UDP-N-acetylglucosamine 2-epimerase (378 aa).

This sequence belongs to the UDP-N-acetylglucosamine 2-epimerase family.

The protein resides in the cytoplasm. It catalyses the reaction UDP-N-acetyl-alpha-D-glucosamine = UDP-N-acetyl-alpha-D-mannosamine. The protein is Putative UDP-N-acetylglucosamine 2-epimerase of Thermotoga maritima (strain ATCC 43589 / DSM 3109 / JCM 10099 / NBRC 100826 / MSB8).